Reading from the N-terminus, the 492-residue chain is Fascin-2 (492 aa).

Belongs to the fascin family. As to expression, localized specifically in the outer and inner segments of the photoreceptor cells in the retina.

The protein resides in the cytoplasm. It localises to the cytoskeleton. The protein localises to the cell projection. It is found in the stereocilium. Its function is as follows. Acts as an actin bundling protein. May play a pivotal role in photoreceptor cell-specific events, such as disk morphogenesis. This chain is Fascin-2 (FSCN2), found in Homo sapiens (Human).